The chain runs to 168 residues: MQGLVEFVLSNFIFTLINLWIMYWVLKKFLFKPTTEYMEGRKKSIADSIQEAEMKNKEADESKAQYDMKLQDIKKERSQIIDEATKRAEKRGDEIIKAAEDEAEKVIERAMTEIQREKQKSLNEMKNEISQLAIAAATKVIEKDLDEGTHHKMIQQFIDEVGETKWQN.

A helical transmembrane segment spans residues 7–26; the sequence is FVLSNFIFTLINLWIMYWVL.

This sequence belongs to the ATPase B chain family. F-type ATPases have 2 components, F(1) - the catalytic core - and F(0) - the membrane proton channel. F(1) has five subunits: alpha(3), beta(3), gamma(1), delta(1), epsilon(1). F(0) has three main subunits: a(1), b(2) and c(10-14). The alpha and beta chains form an alternating ring which encloses part of the gamma chain. F(1) is attached to F(0) by a central stalk formed by the gamma and epsilon chains, while a peripheral stalk is formed by the delta and b chains.

Its subcellular location is the cell membrane. F(1)F(0) ATP synthase produces ATP from ADP in the presence of a proton or sodium gradient. F-type ATPases consist of two structural domains, F(1) containing the extramembraneous catalytic core and F(0) containing the membrane proton channel, linked together by a central stalk and a peripheral stalk. During catalysis, ATP synthesis in the catalytic domain of F(1) is coupled via a rotary mechanism of the central stalk subunits to proton translocation. Its function is as follows. Component of the F(0) channel, it forms part of the peripheral stalk, linking F(1) to F(0). The polypeptide is ATP synthase subunit b (Alkaliphilus metalliredigens (strain QYMF)).